The following is an 872-amino-acid chain: Leucine--tRNA ligase (872 aa).

The short motif at 56–66 (PYPSGNLHMGH) is the 'HIGH' region element. A 'KMSKS' region motif is present at residues 629-633 (KMSKS). Lys-632 is a binding site for ATP.

Belongs to the class-I aminoacyl-tRNA synthetase family.

It is found in the cytoplasm. The catalysed reaction is tRNA(Leu) + L-leucine + ATP = L-leucyl-tRNA(Leu) + AMP + diphosphate. The chain is Leucine--tRNA ligase from Prochlorococcus marinus (strain MIT 9211).